The primary structure comprises 358 residues: RNA demethylase ALKBH5 (358 aa).

A disordered region spans residues 1–50; the sequence is MSATYTDLREKLQSLYRDSPKEVRKRKQPTSDTEEEEAASEPEEEEEARK. Basic and acidic residues predominate over residues 7-22; it reads DLREKLQSLYRDSPKE. Residues 32–46 are compositionally biased toward acidic residues; sequence DTEEEEAASEPEEEE. Tyr105 is an active-site residue. Asn159, Tyr161, His170, His232, and Arg243 together coordinate 2-oxoglutarate. The cysteines at positions 196 and 233 are disulfide-linked. Disordered stretches follow at residues 259–312 and 334–358; these read EMKS…RRSV and DYVD…MRRH. Polar residues predominate over residues 262–278; that stretch reads SLSSSYQPERLQGSNRQ. A compositionally biased stretch (basic residues) spans 279-288; that stretch reads HILKPKRSHR. Residues 289 to 310 show a composition bias toward basic and acidic residues; it reads KADPDAAHRPRILEMDKEENRR.

This sequence belongs to the alkB family. As to quaternary structure, monomer. It depends on Fe(2+) as a cofactor.

Its subcellular location is the nucleus speckle. The enzyme catalyses an N(6)-methyladenosine in mRNA + 2-oxoglutarate + O2 = an adenosine in mRNA + formaldehyde + succinate + CO2. Its function is as follows. Dioxygenase that specifically demethylates N(6)-methyladenosine (m6A) RNA, the most prevalent internal modification of messenger RNA (mRNA) in higher eukaryotes. Demethylates RNA by oxidative demethylation, which requires molecular oxygen, alpha-ketoglutarate and iron. Demethylation of m6A mRNA affects mRNA processing, translation and export. This is RNA demethylase ALKBH5 (alkbh5) from Xenopus tropicalis (Western clawed frog).